A 175-amino-acid chain; its full sequence is Sec-independent protein translocase protein TatB (175 aa).

Residues 1 to 21 (MLDLGLSKMALIGVVALVVLG) form a helical membrane-spanning segment. The span at 99–115 (GDPAAADASGGLGATSD) shows a compositional bias: low complexity. Residues 99–118 (GDPAAADASGGLGATSDEPS) form a disordered region.

The protein belongs to the TatB family. The Tat system comprises two distinct complexes: a TatABC complex, containing multiple copies of TatA, TatB and TatC subunits, and a separate TatA complex, containing only TatA subunits. Substrates initially bind to the TatABC complex, which probably triggers association of the separate TatA complex to form the active translocon.

Its subcellular location is the cell inner membrane. Part of the twin-arginine translocation (Tat) system that transports large folded proteins containing a characteristic twin-arginine motif in their signal peptide across membranes. Together with TatC, TatB is part of a receptor directly interacting with Tat signal peptides. TatB may form an oligomeric binding site that transiently accommodates folded Tat precursor proteins before their translocation. This is Sec-independent protein translocase protein TatB from Burkholderia thailandensis (strain ATCC 700388 / DSM 13276 / CCUG 48851 / CIP 106301 / E264).